The primary structure comprises 550 residues: Mitochondrial distribution and morphology protein 12 (550 aa).

The SMP-LTD domain occupies 1-550 (MSIELNWETL…VYPSFWTFLV (550 aa)). Disordered stretches follow at residues 62–168 (ITDP…PQDL), 218–356 (PPQW…TKYR), and 474–493 (TLAS…GGNT). Positions 69-90 (FYEEDPDVDYDDEDEDVEETHD) are enriched in acidic residues. Residues 125-140 (VASSSSSSVGRGSAPR) show a composition bias toward low complexity. 4 stretches are compositionally biased toward polar residues: residues 148–157 (PTKSNININT), 251–269 (PSHS…QTAS), 278–289 (TPTSFLRSGQQT), and 296–323 (VSTL…TAQE).

Belongs to the MDM12 family. As to quaternary structure, component of the ER-mitochondria encounter structure (ERMES) or MDM complex, composed of MMM1, MDM10, MDM12 and MDM34. An MMM1 homodimer associates with one molecule of MDM12 on each side in a pairwise head-to-tail manner, and the SMP-LTD domains of MMM1 and MDM12 generate a continuous hydrophobic tunnel for phospholipid trafficking.

Its subcellular location is the mitochondrion outer membrane. It localises to the endoplasmic reticulum membrane. In terms of biological role, component of the ERMES/MDM complex, which serves as a molecular tether to connect the endoplasmic reticulum (ER) and mitochondria. Components of this complex are involved in the control of mitochondrial shape and protein biogenesis, and function in nonvesicular lipid trafficking between the ER and mitochondria. MDM12 is required for the interaction of the ER-resident membrane protein MMM1 and the outer mitochondrial membrane-resident beta-barrel protein MDM10. The MDM12-MMM1 subcomplex functions in the major beta-barrel assembly pathway that is responsible for biogenesis of all mitochondrial outer membrane beta-barrel proteins, and acts in a late step after the SAM complex. The MDM10-MDM12-MMM1 subcomplex further acts in the TOM40-specific pathway after the action of the MDM12-MMM1 complex. Essential for establishing and maintaining the structure of mitochondria and maintenance of mtDNA nucleoids. The chain is Mitochondrial distribution and morphology protein 12 from Pyricularia oryzae (strain 70-15 / ATCC MYA-4617 / FGSC 8958) (Rice blast fungus).